Reading from the N-terminus, the 1609-residue chain is Probable outer membrane protein pmp21 (1609 aa).

A signal peptide spans 1–30; that stretch reads MVAKKTVRSYRSSFSHSVIVAILSAGIAFE. Residues 132–145 show a composition bias toward polar residues; the sequence is FSQPTQEPDTSNAV. 2 disordered regions span residues 132-183 and 640-677; these read FSQP…KSPE and TAPVESDASSTNKDEKSLNACSHGDHYPPKTVEEEVPP. 2 stretches are compositionally biased toward basic and acidic residues: residues 149–175 and 651–672; these read ISSDTKENRKDLETEDPSKKSGLKEVS and NKDEKSLNACSHGDHYPPKTVE. Residues 1328-1609 enclose the Autotransporter domain; that stretch reads ELDFSTNVWG…DFNGGIRIIF (282 aa).

The protein belongs to the PMP outer membrane protein family.

Its subcellular location is the secreted. It localises to the cell wall. The protein localises to the cell outer membrane. The sequence is that of Probable outer membrane protein pmp21 (pmp21) from Chlamydia pneumoniae (Chlamydophila pneumoniae).